Reading from the N-terminus, the 554-residue chain is Trimethyltridecatetraene synthase (554 aa).

The chain crosses the membrane as a helical span at residues Met1–Ser21. Residue Cys464 coordinates heme.

It belongs to the cytochrome P450 family. Requires heme as cofactor.

The protein resides in the membrane. It catalyses the reaction (6E,10E)-geranyllinalool + reduced [NADPH--hemoprotein reductase] + O2 = (3E,7E)-4,8,12-trimethyltrideca 1,3,7,11-tetraene + but-3-en-2-one + oxidized [NADPH--hemoprotein reductase] + 2 H2O + H(+). Its pathway is secondary metabolite biosynthesis; terpenoid biosynthesis. Its function is as follows. Component of the volatile terpenes biosynthesis pathways. Converts mainly geranyllinalool to trimethyltridecatetraene (TMTT). In Zea mays (Maize), this protein is Trimethyltridecatetraene synthase.